Reading from the N-terminus, the 579-residue chain is Probable cytochrome c biosynthesis protein (579 aa).

Belongs to the CcmF/CycK/Ccl1/NrfE/CcsA family.

It is found in the mitochondrion. In terms of biological role, could be involved in assembly and maturation of cytochromes c. May play a role in guidance of apocytochromes and heme groups for the covalent linkage introduced by the cytochrome-c-heme lyase. In Daucus carota (Wild carrot), this protein is Probable cytochrome c biosynthesis protein.